A 98-amino-acid polypeptide reads, in one-letter code: Aspartyl/glutamyl-tRNA(Asn/Gln) amidotransferase subunit C (98 aa).

Belongs to the GatC family. In terms of assembly, heterotrimer of A, B and C subunits.

The catalysed reaction is L-glutamyl-tRNA(Gln) + L-glutamine + ATP + H2O = L-glutaminyl-tRNA(Gln) + L-glutamate + ADP + phosphate + H(+). It carries out the reaction L-aspartyl-tRNA(Asn) + L-glutamine + ATP + H2O = L-asparaginyl-tRNA(Asn) + L-glutamate + ADP + phosphate + 2 H(+). Its function is as follows. Allows the formation of correctly charged Asn-tRNA(Asn) or Gln-tRNA(Gln) through the transamidation of misacylated Asp-tRNA(Asn) or Glu-tRNA(Gln) in organisms which lack either or both of asparaginyl-tRNA or glutaminyl-tRNA synthetases. The reaction takes place in the presence of glutamine and ATP through an activated phospho-Asp-tRNA(Asn) or phospho-Glu-tRNA(Gln). The protein is Aspartyl/glutamyl-tRNA(Asn/Gln) amidotransferase subunit C of Paenarthrobacter aurescens (strain TC1).